The primary structure comprises 209 residues: Kynurenine formamidase (209 aa).

Tryptophan 20 contributes to the substrate binding site. Histidine 50, histidine 54, and aspartate 56 together coordinate Zn(2+). The active-site Proton donor/acceptor is histidine 60. Residues histidine 161 and glutamate 173 each coordinate Zn(2+).

This sequence belongs to the Cyclase 1 superfamily. KynB family. As to quaternary structure, homodimer. Zn(2+) serves as cofactor.

It catalyses the reaction N-formyl-L-kynurenine + H2O = L-kynurenine + formate + H(+). It functions in the pathway amino-acid degradation; L-tryptophan degradation via kynurenine pathway; L-kynurenine from L-tryptophan: step 2/2. Functionally, catalyzes the hydrolysis of N-formyl-L-kynurenine to L-kynurenine, the second step in the kynurenine pathway of tryptophan degradation. This is Kynurenine formamidase from Bacillus anthracis.